A 516-amino-acid polypeptide reads, in one-letter code: Cyclic AMP response element-binding protein A (516 aa).

A phosphoserine mark is found at Ser75, Ser79, and Ser82. Disordered stretches follow at residues 213–237, 294–338, and 353–408; these read KDEP…SQHQ, KSEK…HLFA, and PAGG…KGST. Residues 221 to 237 show a composition bias toward low complexity; sequence SSCPASPTSQASSSQHQ. The span at 361–392 shows a compositional bias: low complexity; that stretch reads RVSRTAASITRSSSGSASASGSSTSSTVTTTR. The bZIP domain maps to 441–504; sequence SLKKIRRKIK…ANLLSQLHKL (64 aa). The segment at 443 to 463 is basic motif; sequence KKIRRKIKNKISAQESRRKKK. A leucine-zipper region spans residues 469–476; it reads LERRVEIL.

Belongs to the bZIP family. In terms of assembly, may bind DNA as heterodimers with other bZIP proteins. In terms of tissue distribution, in all cell types examined, including developing salivary gland in embryos and in adults, brain and optic lobe cell bodies, salivary gland, midgut epithelial cells of the cardia, female ovarian columnar follicle cells and male seminal vesicle, ejaculatory duct, and ejaculatory bulb.

The protein localises to the nucleus. Its function is as follows. Transcriptional activator. Binds to fat body-specific enhancers of alcohol dehydrogenase (ADH) and yolk protein genes. BBF-2 may play a role in fat body gene expression. It binds the consensus sequence 5'-T[AC]NACGTAN[TG]C-3'. In Drosophila melanogaster (Fruit fly), this protein is Cyclic AMP response element-binding protein A (CrebA).